The sequence spans 87 residues: Acyl-CoA-binding protein (87 aa).

Serine 2 carries the post-translational modification N-acetylserine. The 86-residue stretch at 2–87 (SQADFDKAAE…VEELKKKYGI (86 aa)) folds into the ACB domain. The residue at position 8 (lysine 8) is an N6-acetyllysine; alternate. An N6-succinyllysine; alternate modification is found at lysine 8. An an acyl-CoA-binding site is contributed by lysine 14. Lysine 17 carries the N6-succinyllysine modification. Tyrosine 29 bears the Phosphotyrosine mark. An acyl-CoA contacts are provided by residues 29–33 (YSHFK), lysine 51, lysine 55, and tyrosine 74. At lysine 51 the chain carries N6-acetyllysine. At lysine 55 the chain carries N6-acetyllysine; alternate. Residue lysine 55 is modified to N6-succinyllysine; alternate. An N6-(2-hydroxyisobutyryl)lysine; alternate modification is found at lysine 55. An N6-malonyllysine; alternate modification is found at lysine 55. Residue lysine 77 is modified to N6-acetyllysine; alternate. The residue at position 77 (lysine 77) is an N6-succinyllysine; alternate.

This sequence belongs to the ACBP family. As to quaternary structure, monomer.

The protein resides in the endoplasmic reticulum. It localises to the golgi apparatus. Its function is as follows. Binds medium- and long-chain acyl-CoA esters with very high affinity and may function as an intracellular carrier of acyl-CoA esters. It is also able to displace diazepam from the benzodiazepine (BZD) recognition site located on the GABA type A receptor. It is therefore possible that this protein also acts as a neuropeptide to modulate the action of the GABA receptor. The polypeptide is Acyl-CoA-binding protein (Dbi) (Rattus norvegicus (Rat)).